Consider the following 55-residue polypeptide: Large ribosomal subunit protein bL32 (55 aa).

Over residues 1–19 (MAVPKRRMSRANTHSRRSQ) the composition is skewed to basic residues. The tract at residues 1–20 (MAVPKRRMSRANTHSRRSQW) is disordered.

Belongs to the bacterial ribosomal protein bL32 family.

This is Large ribosomal subunit protein bL32 from Corynebacterium jeikeium (strain K411).